We begin with the raw amino-acid sequence, 201 residues long: Probable molybdenum cofactor guanylyltransferase (201 aa).

GTP-binding positions include 6 to 8 (LAG), Lys-18, Asp-65, and Asp-97. Asp-97 is a Mg(2+) binding site.

It belongs to the MobA family. It depends on Mg(2+) as a cofactor.

It localises to the cytoplasm. It catalyses the reaction Mo-molybdopterin + GTP + H(+) = Mo-molybdopterin guanine dinucleotide + diphosphate. Its function is as follows. Transfers a GMP moiety from GTP to Mo-molybdopterin (Mo-MPT) cofactor (Moco or molybdenum cofactor) to form Mo-molybdopterin guanine dinucleotide (Mo-MGD) cofactor. The protein is Probable molybdenum cofactor guanylyltransferase of Staphylococcus epidermidis (strain ATCC 35984 / DSM 28319 / BCRC 17069 / CCUG 31568 / BM 3577 / RP62A).